We begin with the raw amino-acid sequence, 347 residues long: DNA primase small subunit PriS (347 aa).

Residues Asp95 and Asp97 contribute to the active site. Residues Cys106, His108, Cys114, and Cys117 each coordinate Zn(2+). A Zinc knuckle motif motif is present at residues 106–117 (CNHEPGTVCPIC). Residue Asp280 is part of the active site.

This sequence belongs to the eukaryotic-type primase small subunit family. Heterodimer of a small subunit (PriS) and a large subunit (PriL). Both participate in formation of the active center, but the ATP-binding site is exclusively located on the small subunit. The cofactor is Mg(2+). Requires Mn(2+) as cofactor.

Catalytic subunit of DNA primase, an RNA polymerase that catalyzes the synthesis of short RNA molecules used as primers for DNA polymerase during DNA replication. The small subunit contains the primase catalytic core and has DNA synthesis activity on its own. Binding to the large subunit stabilizes and modulates the activity, increasing the rate of DNA synthesis while decreasing the length of the DNA fragments, and conferring RNA synthesis capability. The DNA polymerase activity may enable DNA primase to also catalyze primer extension after primer synthesis. May also play a role in DNA repair. This Pyrococcus furiosus (strain ATCC 43587 / DSM 3638 / JCM 8422 / Vc1) protein is DNA primase small subunit PriS.